A 1025-amino-acid chain; its full sequence is Collagen alpha-1(VI) chain (1025 aa).

The signal sequence occupies residues 1–19; the sequence is MRLAHALLPLLLQACWVAT. Positions 20-255 are N-terminal globular domain; sequence QDIQGSKAIA…CCSFECQAAR (236 aa). Residues 36-234 enclose the VWFA 1 domain; it reads DLFFVLDTSE…EVISQTIDTI (199 aa). N211 carries an N-linked (GlcNAc...) asparagine glycan. Residues 252–588 form a disordered region; that stretch reads QAARGPPGPR…QGPPGHVGPP (337 aa). The tract at residues 256–591 is triple-helical region; sequence GPPGPRGDPG…PGHVGPPGPD (336 aa). Residues 261 to 263 carry the Cell attachment site motif; sequence RGD. 2 stretches are compositionally biased toward basic and acidic residues: residues 267-284 and 300-333; these read EGER…EAGD and KGEK…DGMK. 2 short sequence motifs (cell attachment site) span residues 441-443 and 477-479; these read RGD. N515 and N536 each carry an N-linked (GlcNAc...) asparagine glycan. Residues 549-559 are compositionally biased toward acidic residues; the sequence is GEVGDPGEDNN. Over residues 578–588 the composition is skewed to pro residues; it reads PQGPPGHVGPP. The tract at residues 592 to 1025 is C-terminal globular domain; the sequence is ECEILDIIMK…QTVSRKVALG (434 aa). VWFA domains lie at 614-802 and 826-1018; these read DILF…LKNI and DITI…YQTV. N-linked (GlcNAc...) asparagine glycans are attached at residues N801 and N893.

The protein belongs to the type VI collagen family. Trimers composed of three different chains: alpha-1(VI), alpha-2(VI), and alpha-3(VI) or alpha-4(VI) or alpha-5(VI) or alpha-6(VI). Prolines at the third position of the tripeptide repeating unit (G-X-Y) are hydroxylated in some or all of the chains.

It localises to the secreted. It is found in the extracellular space. Its subcellular location is the extracellular matrix. Collagen VI acts as a cell-binding protein. In Mus musculus (Mouse), this protein is Collagen alpha-1(VI) chain (Col6a1).